Consider the following 283-residue polypeptide: Thymidylate synthase (283 aa).

Arg22 is a dUMP binding site. Catalysis depends on Cys160, which acts as the Nucleophile. DUMP-binding positions include 180–183, Asn191, and 221–223; these read RSCD and HIY. Asp183 is a binding site for (6R)-5,10-methylene-5,6,7,8-tetrahydrofolate. Residue Ser282 coordinates (6R)-5,10-methylene-5,6,7,8-tetrahydrofolate.

Belongs to the thymidylate synthase family. Bacterial-type ThyA subfamily. Homodimer.

The protein resides in the cytoplasm. It catalyses the reaction dUMP + (6R)-5,10-methylene-5,6,7,8-tetrahydrofolate = 7,8-dihydrofolate + dTMP. It participates in pyrimidine metabolism; dTTP biosynthesis. Catalyzes the reductive methylation of 2'-deoxyuridine-5'-monophosphate (dUMP) to 2'-deoxythymidine-5'-monophosphate (dTMP) while utilizing 5,10-methylenetetrahydrofolate (mTHF) as the methyl donor and reductant in the reaction, yielding dihydrofolate (DHF) as a by-product. This enzymatic reaction provides an intracellular de novo source of dTMP, an essential precursor for DNA biosynthesis. This chain is Thymidylate synthase, found in Marinomonas sp. (strain MWYL1).